We begin with the raw amino-acid sequence, 397 residues long: Sulfate adenylyltransferase (397 aa).

The protein belongs to the sulfate adenylyltransferase family.

The catalysed reaction is sulfate + ATP + H(+) = adenosine 5'-phosphosulfate + diphosphate. It functions in the pathway sulfur metabolism; hydrogen sulfide biosynthesis; sulfite from sulfate: step 1/3. The sequence is that of Sulfate adenylyltransferase (sat) from Allochromatium vinosum (strain ATCC 17899 / DSM 180 / NBRC 103801 / NCIMB 10441 / D) (Chromatium vinosum).